The sequence spans 89 residues: Small ribosomal subunit protein uS15 (89 aa).

The protein belongs to the universal ribosomal protein uS15 family. In terms of assembly, part of the 30S ribosomal subunit. Forms a bridge to the 50S subunit in the 70S ribosome, contacting the 23S rRNA.

Its function is as follows. One of the primary rRNA binding proteins, it binds directly to 16S rRNA where it helps nucleate assembly of the platform of the 30S subunit by binding and bridging several RNA helices of the 16S rRNA. Forms an intersubunit bridge (bridge B4) with the 23S rRNA of the 50S subunit in the ribosome. This Bacillus licheniformis (strain ATCC 14580 / DSM 13 / JCM 2505 / CCUG 7422 / NBRC 12200 / NCIMB 9375 / NCTC 10341 / NRRL NRS-1264 / Gibson 46) protein is Small ribosomal subunit protein uS15.